A 422-amino-acid chain; its full sequence is Retinoic acid receptor RXR-beta-B (422 aa).

Residues 1–89 are modulating; sequence MNSLPPSTSA…SGPMLSQKRM (89 aa). 2 consecutive NR C4-type zinc fingers follow at residues 90–110 and 126–150; these read CAICGDRSSGKHYGVYSCEGC and CRDNKECLVDKRQRNRCQYCRYQKC. A DNA-binding region (nuclear receptor) is located at residues 90-155; it reads CAICGDRSSG…RYQKCLAMGM (66 aa). A hinge region spans residues 156–178; the sequence is KREAVQEERQKNKERDGDYECSS. Positions 161-173 are enriched in basic and acidic residues; sequence QEERQKNKERDGD. The segment at 161–182 is disordered; it reads QEERQKNKERDGDYECSSSANE. An NR LBD domain is found at 181 to 421; sequence NEEMPVEKIL…TFLMEMLESP (241 aa).

The protein belongs to the nuclear hormone receptor family. NR2 subfamily. Homodimer. Heterodimer; with a rar molecule. Binds DNA preferentially as a rar/rxr heterodimer. Heterodimerizes with rarga. As to expression, shows uniform expression from the blastula to mid-gastrula stages. At 12 hours post-fertilization (hpf), expressed ubiquitously but more weakly. At 24 hpf, restricted to the ventral diencephalon, pharangeal endoderm and trunk and tail mesoderm; mesoderm expression is in medial cells of each somite along the dorsoventral axis, forming stripes. At 48 hpf, expressed in forebrain, eye, midbrain and anterior hindbrain.

The protein resides in the nucleus. In terms of biological role, receptor for retinoic acid. Retinoic acid receptors bind as heterodimers to their target response elements in response to their ligands, all-trans or 9-cis retinoic acid, and regulate gene expression in various biological processes. The rar/rxr heterodimers bind to the retinoic acid response elements (RARE) composed of tandem 5'-AGGTCA-3' sites known as DR1-DR5. The high affinity ligand for rxrs is 9-cis retinoic acid. This chain is Retinoic acid receptor RXR-beta-B (rxrbb), found in Danio rerio (Zebrafish).